Reading from the N-terminus, the 467-residue chain is Chromosomal replication initiator protein DnaA (467 aa).

Positions 1-90 are domain I, interacts with DnaA modulators; that stretch reads MSLSLWQQCL…KPVTQTPQAA (90 aa). The domain II stretch occupies residues 91–130; that stretch reads VTSNVAAPAQVAQTQPQRAAPSTRSGWDNVPAPAEPTYRS. The span at 98-111 shows a compositional bias: low complexity; the sequence is PAQVAQTQPQRAAP. The tract at residues 98 to 119 is disordered; sequence PAQVAQTQPQRAAPSTRSGWDN. Residues 131–347 are domain III, AAA+ region; sequence NVNVKHTFDN…GALNRVIANA (217 aa). 4 residues coordinate ATP: Gly175, Gly177, Lys178, and Thr179. Positions 348–467 are domain IV, binds dsDNA; it reads NFTGRAITID…FSNLIRTLSS (120 aa).

It belongs to the DnaA family. As to quaternary structure, oligomerizes as a right-handed, spiral filament on DNA at oriC.

It localises to the cytoplasm. Its function is as follows. Plays an essential role in the initiation and regulation of chromosomal replication. ATP-DnaA binds to the origin of replication (oriC) to initiate formation of the DNA replication initiation complex once per cell cycle. Binds the DnaA box (a 9 base pair repeat at the origin) and separates the double-stranded (ds)DNA. Forms a right-handed helical filament on oriC DNA; dsDNA binds to the exterior of the filament while single-stranded (ss)DNA is stabiized in the filament's interior. The ATP-DnaA-oriC complex binds and stabilizes one strand of the AT-rich DNA unwinding element (DUE), permitting loading of DNA polymerase. After initiation quickly degrades to an ADP-DnaA complex that is not apt for DNA replication. Binds acidic phospholipids. This is Chromosomal replication initiator protein DnaA from Shigella sonnei (strain Ss046).